The chain runs to 472 residues: MLGTVKMEGHETSDWNSYYADTQEAYSSVPVSNMNSGLGSMNSMNTYMTMNTMTTSGNMTPASFNMSYANPGLGAGLSPGAVAGMPGGSAGAMNSMTAAGVTAMGTALSPSGMGAMGAQQAASMNGLGPYAAAMNPCMSPMAYAPSNLGRSRAGGGGDAKTFKRSYPHAKPPYSYISLITMAIQQAPSKMLTLSEIYQWIMDLFPYYRQNQQRWQNSIRHSLSFNDCFVKVARSPDKPGKGSYWTLHPDSGNMFENGCYLRRQKRFKCEKQPGAGGGGGSGSGGSGAKGGPESRKDPSGASNPSADSPLHRGVHGKTGQLEGAPAPGPAASPQTLDHSGATATGGASELKTPASSTAPPISSGPGALASVPASHPAHGLAPHESQLHLKGDPHYSFNHPFSINNLMSSSEQQHKLDFKAYEQALQYSPYGSTLPASLPLGSASVTTRSPIEPSALEPAYYQGVYSRPVLNTS.

The fork-head DNA-binding region spans 169–260 (AKPPYSYISL…GNMFENGCYL (92 aa)). Residues 269–392 (EKQPGAGGGG…ESQLHLKGDP (124 aa)) form a disordered region. The segment covering 273–289 (GAGGGGGSGSGGSGAKG) has biased composition (gly residues). Residues S307 and S331 each carry the phosphoserine modification. Low complexity-rich tracts occupy residues 322-332 (GAPAPGPAASP) and 351-366 (TPAS…GPGA).

Binds DNA as a monomer. Interacts with FOXA2. Interacts with NKX2-1. Interacts with HDAC7. Interacts with the histone H3-H4 heterodimer. Associates with nucleosomes containing histone H2A. Interacts with AR. Interacts with NR0B2. Highly expressed in prostate and ESR1-positive breast tumors. Overexpressed in esophageal and lung adenocarcinomas.

The protein resides in the nucleus. Functionally, transcription factor that is involved in embryonic development, establishment of tissue-specific gene expression and regulation of gene expression in differentiated tissues. Is thought to act as a 'pioneer' factor opening the compacted chromatin for other proteins through interactions with nucleosomal core histones and thereby replacing linker histones at target enhancer and/or promoter sites. Binds DNA with the consensus sequence 5'-[AC]A[AT]T[AG]TT[GT][AG][CT]T[CT]-3'. Proposed to play a role in translating the epigenetic signatures into cell type-specific enhancer-driven transcriptional programs. Its differential recruitment to chromatin is dependent on distribution of histone H3 methylated at 'Lys-5' (H3K4me2) in estrogen-regulated genes. Involved in the development of multiple endoderm-derived organ systems such as liver, pancreas, lung and prostate; FOXA1 and FOXA2 seem to have at least in part redundant roles. Modulates the transcriptional activity of nuclear hormone receptors. Is involved in ESR1-mediated transcription; required for ESR1 binding to the NKX2-1 promoter in breast cancer cells; binds to the RPRM promoter and is required for the estrogen-induced repression of RPRM. Involved in regulation of apoptosis by inhibiting the expression of BCL2. Involved in cell cycle regulation by activating expression of CDKN1B, alone or in conjunction with BRCA1. Originally described as a transcription activator for a number of liver genes such as AFP, albumin, tyrosine aminotransferase, PEPCK, etc. Interacts with the cis-acting regulatory regions of these genes. Involved in glucose homeostasis. The chain is Hepatocyte nuclear factor 3-alpha (FOXA1) from Homo sapiens (Human).